The following is a 367-amino-acid chain: Probable dual-specificity RNA methyltransferase RlmN (367 aa).

Glu92 serves as the catalytic Proton acceptor. Residues 98–326 (QEYGLSVCVT…YDTLKKNGIN (229 aa)) form the Radical SAM core domain. A disulfide bridge connects residues Cys105 and Cys341. Residues Cys112, Cys116, and Cys119 each contribute to the [4Fe-4S] cluster site. Residues 164-165 (GE), Ser196, 219-221 (SLH), and Asn297 contribute to the S-adenosyl-L-methionine site. Residue Cys341 is the S-methylcysteine intermediate of the active site.

This sequence belongs to the radical SAM superfamily. RlmN family. [4Fe-4S] cluster is required as a cofactor.

Its subcellular location is the cytoplasm. It catalyses the reaction adenosine(2503) in 23S rRNA + 2 reduced [2Fe-2S]-[ferredoxin] + 2 S-adenosyl-L-methionine = 2-methyladenosine(2503) in 23S rRNA + 5'-deoxyadenosine + L-methionine + 2 oxidized [2Fe-2S]-[ferredoxin] + S-adenosyl-L-homocysteine. The catalysed reaction is adenosine(37) in tRNA + 2 reduced [2Fe-2S]-[ferredoxin] + 2 S-adenosyl-L-methionine = 2-methyladenosine(37) in tRNA + 5'-deoxyadenosine + L-methionine + 2 oxidized [2Fe-2S]-[ferredoxin] + S-adenosyl-L-homocysteine. Functionally, specifically methylates position 2 of adenine 2503 in 23S rRNA and position 2 of adenine 37 in tRNAs. The polypeptide is Probable dual-specificity RNA methyltransferase RlmN (Listeria welshimeri serovar 6b (strain ATCC 35897 / DSM 20650 / CCUG 15529 / CIP 8149 / NCTC 11857 / SLCC 5334 / V8)).